A 136-amino-acid chain; its full sequence is Large ribosomal subunit protein uL16 (136 aa).

It belongs to the universal ribosomal protein uL16 family. As to quaternary structure, part of the 50S ribosomal subunit.

Binds 23S rRNA and is also seen to make contacts with the A and possibly P site tRNAs. This chain is Large ribosomal subunit protein uL16, found in Rickettsia rickettsii (strain Iowa).